A 161-amino-acid chain; its full sequence is Nucleotide-binding protein Veis_3464 (161 aa).

This sequence belongs to the YajQ family.

Nucleotide-binding protein. This chain is Nucleotide-binding protein Veis_3464, found in Verminephrobacter eiseniae (strain EF01-2).